A 392-amino-acid chain; its full sequence is Phospho-N-acetylmuramoyl-pentapeptide-transferase (392 aa).

10 helical membrane-spanning segments follow: residues 28-48 (RALMAALTALVVGLVAGPYVI), 74-94 (TPTMGGVLVLFAIAFATLMWF), 100-120 (FVWIVLWVTLGFGAIGWVDDW), 137-157 (YFWQSVVGLIAGFYLLFSISE), 193-213 (VSYPLGGIGFVILTYLVIVGA), 225-245 (GLAIMPVVMVGSALGVFAYVT), 262-282 (SGELLVFCSAMAGAGLAFLWF), 289-309 (VFMGDVGALALGGALGTIAVI), 314-334 (IVFFIMGGIFVVEAISVMAQV), and 369-389 (QVVVRFWIITMLLCLIGLSTL).

It belongs to the glycosyltransferase 4 family. MraY subfamily. The cofactor is Mg(2+).

The protein resides in the cell inner membrane. It carries out the reaction UDP-N-acetyl-alpha-D-muramoyl-L-alanyl-gamma-D-glutamyl-meso-2,6-diaminopimeloyl-D-alanyl-D-alanine + di-trans,octa-cis-undecaprenyl phosphate = di-trans,octa-cis-undecaprenyl diphospho-N-acetyl-alpha-D-muramoyl-L-alanyl-D-glutamyl-meso-2,6-diaminopimeloyl-D-alanyl-D-alanine + UMP. The protein operates within cell wall biogenesis; peptidoglycan biosynthesis. Functionally, catalyzes the initial step of the lipid cycle reactions in the biosynthesis of the cell wall peptidoglycan: transfers peptidoglycan precursor phospho-MurNAc-pentapeptide from UDP-MurNAc-pentapeptide onto the lipid carrier undecaprenyl phosphate, yielding undecaprenyl-pyrophosphoryl-MurNAc-pentapeptide, known as lipid I. The sequence is that of Phospho-N-acetylmuramoyl-pentapeptide-transferase from Variovorax paradoxus (strain S110).